Consider the following 304-residue polypeptide: MAETNPELSDLMAQTNKKIVPKFTEIFPVEDVNYPYSAFIASVRKDVIKHCTDHKGIFQPVLPPEKKVPELWFYTELKTRTSSITLAIRMDNLYLVGFRTPGGVWWEFGKAGDTHLLGDNPRWLGFGGRYQDLIGNKGLETVTMGRAEMTRAVNDLAKKKKMATLEEEEVQMQMQMPEAAELAAAAAAADPQADTKSKLVKLVVMVCEGLRFNTVSRTVDAGFNSQHGVTLTVTQGKQVQKWDRISKAAFEWADHPTAVIPDMQKLGIKDKNEAARIVALVKNQTTAAAAAATAASADNDDDEA.

Residue Glu-208 is part of the active site.

Belongs to the ribosome-inactivating protein family. Type 1 RIP subfamily. Monomer. In terms of tissue distribution, accumulates to high levels in seeds.

Its subcellular location is the cytoplasm. The enzyme catalyses Endohydrolysis of the N-glycosidic bond at one specific adenosine on the 28S rRNA.. Its function is as follows. Possesses features of some constitutive defense agent. The coordinate Opaque-2-controlled synthesis of this protein and the major seed storage proteins (zeins) may provide the germinating seedling with both nutritional benefits and protection against pathogen invasion of the surrounding endosperm. This is Ribosome-inactivating protein 9 (CRIP9) from Zea mays (Maize).